Here is a 519-residue protein sequence, read N- to C-terminus: Cytochrome P450 52A12 (519 aa).

C467 lines the heme pocket.

The protein belongs to the cytochrome P450 family. Requires heme as cofactor.

It is found in the membrane. Together with an NADPH cytochrome P450 the enzyme system catalyzes the terminal hydroxylation as the first step in the assimilation of alkanes and fatty acids. This Debaryomyces hansenii (Yeast) protein is Cytochrome P450 52A12 (CYP52A12).